The following is a 62-amino-acid chain: Large ribosomal subunit protein uL29 (62 aa).

The protein belongs to the universal ribosomal protein uL29 family.

The protein is Large ribosomal subunit protein uL29 of Desulfatibacillum aliphaticivorans.